Consider the following 205-residue polypeptide: Holliday junction branch migration complex subunit RuvA (205 aa).

The interval M1 to R64 is domain I. The domain II stretch occupies residues S65 to A143. The tract at residues H144–S153 is flexible linker. The interval S153–K205 is domain III.

Belongs to the RuvA family. As to quaternary structure, homotetramer. Forms an RuvA(8)-RuvB(12)-Holliday junction (HJ) complex. HJ DNA is sandwiched between 2 RuvA tetramers; dsDNA enters through RuvA and exits via RuvB. An RuvB hexamer assembles on each DNA strand where it exits the tetramer. Each RuvB hexamer is contacted by two RuvA subunits (via domain III) on 2 adjacent RuvB subunits; this complex drives branch migration. In the full resolvosome a probable DNA-RuvA(4)-RuvB(12)-RuvC(2) complex forms which resolves the HJ.

It localises to the cytoplasm. Functionally, the RuvA-RuvB-RuvC complex processes Holliday junction (HJ) DNA during genetic recombination and DNA repair, while the RuvA-RuvB complex plays an important role in the rescue of blocked DNA replication forks via replication fork reversal (RFR). RuvA specifically binds to HJ cruciform DNA, conferring on it an open structure. The RuvB hexamer acts as an ATP-dependent pump, pulling dsDNA into and through the RuvAB complex. HJ branch migration allows RuvC to scan DNA until it finds its consensus sequence, where it cleaves and resolves the cruciform DNA. This is Holliday junction branch migration complex subunit RuvA from Rhodopseudomonas palustris (strain BisA53).